The following is a 356-amino-acid chain: Tetraacyldisaccharide 4'-kinase (356 aa).

67–74 (FVGGTGKT) is an ATP binding site.

Belongs to the LpxK family.

It carries out the reaction a lipid A disaccharide + ATP = a lipid IVA + ADP + H(+). It participates in glycolipid biosynthesis; lipid IV(A) biosynthesis; lipid IV(A) from (3R)-3-hydroxytetradecanoyl-[acyl-carrier-protein] and UDP-N-acetyl-alpha-D-glucosamine: step 6/6. Transfers the gamma-phosphate of ATP to the 4'-position of a tetraacyldisaccharide 1-phosphate intermediate (termed DS-1-P) to form tetraacyldisaccharide 1,4'-bis-phosphate (lipid IVA). The protein is Tetraacyldisaccharide 4'-kinase of Herminiimonas arsenicoxydans.